Consider the following 380-residue polypeptide: 3-methylitaconate isomerase (380 aa).

The protein belongs to the PrpF family. As to quaternary structure, homotetramer.

The catalysed reaction is 2-methylene-3-methylsuccinate = dimethylmaleate. The protein operates within cofactor degradation; nicotinate degradation; propanoate and pyruvate from 6-hydroxynicotinate: step 6/8. Inhibited by oxidized glutathione, p-chloromercuriphenylsulfonic acid and iodoacetic acid. Not inhibited by the chelating agent alpha,alpha-dipyridyl. Activity is slightly increased by EDTA. Not activated by Fe(2+), Mg(2+), Mn(2+) or Ca(2+). Unaffected by K(+), Na(+), NH4(+), Rb(+) or Li(+). Its function is as follows. Catalyzes the reversible isomerization of (R)-3-methylitaconate to 2,3-dimethylmaleate. Has very low isomerase activity with itaconate. The protein is 3-methylitaconate isomerase (mii) of Eubacterium barkeri (Clostridium barkeri).